A 364-amino-acid chain; its full sequence is Anhydro-N-acetylmuramic acid kinase (364 aa).

11–18 provides a ligand contact to ATP; sequence GSSLDGID.

The protein belongs to the anhydro-N-acetylmuramic acid kinase family.

It carries out the reaction 1,6-anhydro-N-acetyl-beta-muramate + ATP + H2O = N-acetyl-D-muramate 6-phosphate + ADP + H(+). It functions in the pathway amino-sugar metabolism; 1,6-anhydro-N-acetylmuramate degradation. The protein operates within cell wall biogenesis; peptidoglycan recycling. Catalyzes the specific phosphorylation of 1,6-anhydro-N-acetylmuramic acid (anhMurNAc) with the simultaneous cleavage of the 1,6-anhydro ring, generating MurNAc-6-P. Is required for the utilization of anhMurNAc either imported from the medium or derived from its own cell wall murein, and thus plays a role in cell wall recycling. This chain is Anhydro-N-acetylmuramic acid kinase, found in Pseudomonas syringae pv. syringae (strain B728a).